The chain runs to 104 residues: Large ribosomal subunit protein bL21 (104 aa).

Belongs to the bacterial ribosomal protein bL21 family. Part of the 50S ribosomal subunit. Contacts protein L20.

Its function is as follows. This protein binds to 23S rRNA in the presence of protein L20. The sequence is that of Large ribosomal subunit protein bL21 from Leptospira interrogans serogroup Icterohaemorrhagiae serovar copenhageni (strain Fiocruz L1-130).